Consider the following 822-residue polypeptide: Putative pentatricopeptide repeat-containing protein At5g13230, mitochondrial (822 aa).

The N-terminal 70 residues, 1-70 (MIVFMRIIHV…QKNDPISAKA (70 aa)), are a transit peptide targeting the mitochondrion. PPR repeat units lie at residues 48-82 (DSHA…GSCL), 83-117 (DLFA…NNVS), 145-179 (NPHV…GYDS), 180-210 (NAFV…ILCK), 211-245 (DIVV…GFMP), 246-280 (NNYT…CYVL), 281-311 (DPRV…MPKN), 312-346 (DVVP…FVVP), 347-381 (NEFT…GFDL), 382-416 (DIYV…NEVS), 417-447 (WNTV…QVSV), 448-482 (TEVT…NNAK), 483-513 (KVAV…METI), 514-548 (DVAS…DCKP), 549-584 (NGLT…GIEP), and 585-619 (CLEH…PSVM). Positions 620–695 (IWRAMLSASM…EPGLSWIEHQ (76 aa)) are type E motif. The type E(+) motif stretch occupies residues 696-726 (GDVHYFSVGLSDHPDMKLINGMLEWLNMKAT). The tract at residues 727–822 (RAGYVPDRNA…AGVCSCGDHW (96 aa)) is type DYW motif.

This sequence belongs to the PPR family. PCMP-H subfamily.

It localises to the mitochondrion. The chain is Putative pentatricopeptide repeat-containing protein At5g13230, mitochondrial (PCMP-H89) from Arabidopsis thaliana (Mouse-ear cress).